Here is a 252-residue protein sequence, read N- to C-terminus: 2-succinyl-6-hydroxy-2,4-cyclohexadiene-1-carboxylate synthase (252 aa).

Belongs to the AB hydrolase superfamily. MenH family. As to quaternary structure, monomer.

It catalyses the reaction 5-enolpyruvoyl-6-hydroxy-2-succinyl-cyclohex-3-ene-1-carboxylate = (1R,6R)-6-hydroxy-2-succinyl-cyclohexa-2,4-diene-1-carboxylate + pyruvate. It functions in the pathway quinol/quinone metabolism; 1,4-dihydroxy-2-naphthoate biosynthesis; 1,4-dihydroxy-2-naphthoate from chorismate: step 3/7. Its pathway is quinol/quinone metabolism; menaquinone biosynthesis. Catalyzes a proton abstraction reaction that results in 2,5-elimination of pyruvate from 2-succinyl-5-enolpyruvyl-6-hydroxy-3-cyclohexene-1-carboxylate (SEPHCHC) and the formation of 2-succinyl-6-hydroxy-2,4-cyclohexadiene-1-carboxylate (SHCHC). This is 2-succinyl-6-hydroxy-2,4-cyclohexadiene-1-carboxylate synthase from Escherichia fergusonii (strain ATCC 35469 / DSM 13698 / CCUG 18766 / IAM 14443 / JCM 21226 / LMG 7866 / NBRC 102419 / NCTC 12128 / CDC 0568-73).